Here is a 499-residue protein sequence, read N- to C-terminus: Xylulose kinase (499 aa).

81–82 (MH) provides a ligand contact to substrate. The active-site Proton acceptor is aspartate 239.

This sequence belongs to the FGGY kinase family.

The catalysed reaction is D-xylulose + ATP = D-xylulose 5-phosphate + ADP + H(+). Functionally, catalyzes the phosphorylation of D-xylulose to D-xylulose 5-phosphate. The chain is Xylulose kinase from Bacillus subtilis (strain 168).